A 415-amino-acid chain; its full sequence is MQTWSSVAVPRVPGTSRPLRLYDTATGQIRPTAPGRVAKMYVCGITPYDATHLGHAATYLAFDLVHRLWLDAGHEVHYVQNVTDIDDPLLERAERDSEDWVVLGLRETALFREDMEALRVLPPRDFVGAVESIPEVVEMIEKLLASGAAYRVDDPEYPDVYFDRSFTGRFGYESNYDDETMRAIFPERGGDPDRPGKRDPLDALLWRVERPGEPAWDSSLGRGRPGWHIECSAIALKHLGIGFDVQGGGSDLVFPHHEFSAAHAEAMTGEHPFARHYVHAGMIGLDGEKMSKSKGNLVFVSRLRADDVDPSAIRLALFAGHYRDDREWTDELLKQANSRLARWREAVSLPSGPDAEATVDRLRDHLADDLDTPKALAAVDAWVDEALRHRSGTVGSESAPALVRAAVDSLLGVVL.

Cys-43 is a Zn(2+) binding site. Residues 43-46 (CGIT), Thr-58, and 81-83 (NVT) each bind L-cysteinyl-5'-AMP. The 'HIGH' region signature appears at 45 to 55 (ITPYDATHLGH). Residues 187 to 192 (ERGGDP) carry the 'ERGGDP' region motif. Residue Trp-227 coordinates L-cysteinyl-5'-AMP. Position 231 (Cys-231) interacts with Zn(2+). 249–251 (GSD) contributes to the L-cysteinyl-5'-AMP binding site. His-256 serves as a coordination point for Zn(2+). L-cysteinyl-5'-AMP is bound at residue Ile-283. Positions 289 to 293 (KMSKS) match the 'KMSKS' region motif.

It belongs to the class-I aminoacyl-tRNA synthetase family. MshC subfamily. Monomer. Requires Zn(2+) as cofactor.

The catalysed reaction is 1D-myo-inositol 2-amino-2-deoxy-alpha-D-glucopyranoside + L-cysteine + ATP = 1D-myo-inositol 2-(L-cysteinylamino)-2-deoxy-alpha-D-glucopyranoside + AMP + diphosphate + H(+). Functionally, catalyzes the ATP-dependent condensation of GlcN-Ins and L-cysteine to form L-Cys-GlcN-Ins. The protein is L-cysteine:1D-myo-inositol 2-amino-2-deoxy-alpha-D-glucopyranoside ligase of Saccharomonospora viridis (strain ATCC 15386 / DSM 43017 / JCM 3036 / CCUG 5913 / NBRC 12207 / NCIMB 9602 / P101) (Thermoactinomyces viridis).